The sequence spans 203 residues: Linker for activation of T-cells family member 2 (203 aa).

Residues 1-6 (MSAELE) are Extracellular-facing. The chain crosses the membrane as a helical; Signal-anchor for type III membrane protein span at residues 7–27 (LLWPVSGLLLLLLGATAWLCV). Residues C26 and C29 are each lipidated (S-palmitoyl cysteine). Residues 28–203 (HCSRPGVKRN…NGDVAAAENI (176 aa)) are Cytoplasmic-facing. Position 59 is a phosphotyrosine (Y59). 2 positions are modified to phosphoserine: S60 and S95. Phosphotyrosine is present on residues Y139, Y160, and Y192. The segment at 171-203 (ESKRTMGAPMSLSGSPDEEPDYVNGDVAAAENI) is disordered.

When phosphorylated, interacts with GRB2. May also interact with SOS1, GAB1 and CBL. Post-translationally, phosphorylated on tyrosines following cross-linking of BCR in B-cells, high affinity IgG receptor (FCGR1) in myeloid cells, or high affinity IgE receptor (FCER1) in mast cells; which induces the recruitment of GRB2. As to expression, strongly expressed in testis. Expressed in heart, spleen and lung. Present in B-cells and mast cells (at protein level).

The protein localises to the cell membrane. Functionally, involved in FCER1 (high affinity immunoglobulin epsilon receptor)-mediated signaling in mast cells. May also be involved in BCR (B-cell antigen receptor)-mediated signaling in B-cells and FCGR1 (high affinity immunoglobulin gamma Fc receptor I)-mediated signaling in myeloid cells. Couples activation of these receptors and their associated kinases with distal intracellular events through the recruitment of GRB2. This is Linker for activation of T-cells family member 2 (Lat2) from Mus musculus (Mouse).